A 163-amino-acid polypeptide reads, in one-letter code: Nucleotide-binding protein YajQ (163 aa).

It belongs to the YajQ family.

Functionally, nucleotide-binding protein. This is Nucleotide-binding protein YajQ from Salmonella heidelberg (strain SL476).